Here is a 489-residue protein sequence, read N- to C-terminus: Rhamnulokinase (489 aa).

13–17 (ASSGR) is a binding site for ATP. Cysteines 68 and 222 form a disulfide. Substrate contacts are provided by residues glycine 83 and 236–238 (HDT). The active-site Proton acceptor is aspartate 237. Threonine 259 contributes to the ATP binding site. Asparagine 296 contacts substrate. Residue glutamine 304 participates in ATP binding. Cysteine 353 and cysteine 370 are disulfide-bonded. Glycine 402 lines the ATP pocket. A disulfide bridge links cysteine 413 with cysteine 417.

The protein belongs to the rhamnulokinase family. In terms of assembly, monomer. The cofactor is Mg(2+).

The catalysed reaction is L-rhamnulose + ATP = L-rhamnulose 1-phosphate + ADP + H(+). Its pathway is carbohydrate degradation; L-rhamnose degradation; glycerone phosphate from L-rhamnose: step 2/3. Functionally, involved in the catabolism of L-rhamnose (6-deoxy-L-mannose). Catalyzes the transfer of the gamma-phosphate group from ATP to the 1-hydroxyl group of L-rhamnulose to yield L-rhamnulose 1-phosphate. The sequence is that of Rhamnulokinase from Escherichia coli O157:H7.